We begin with the raw amino-acid sequence, 672 residues long: Transcriptional regulator Kaiso (672 aa).

The interaction with NCOR1 stretch occupies residues 1–103 (MESRKLISAT…RSDLLDELIK (103 aa)). Positions 1–136 (MESRKLISAT…SGTAQDGNTE (136 aa)) are self-association. The 63-residue stretch at 32 to 94 (CDVTVIVEDR…IYSSKIVRVR (63 aa)) folds into the BTB domain. Residues Lys151 and Lys153 each participate in a glycyl lysine isopeptide (Lys-Gly) (interchain with G-Cter in SUMO2) cross-link. The residue at position 251 (Thr251) is a Phosphothreonine. The interval 298-573 (LPNHMPSSIN…FMSSHIKSVH (276 aa)) is interaction with CBFA2T3. Residues 325–354 (KANEEEEEEIIDDDDDTISSSPDSAVSNTS) are disordered. The segment covering 328 to 341 (EEEEEEIIDDDDDT) has biased composition (acidic residues). Glycyl lysine isopeptide (Lys-Gly) (interchain with G-Cter in SUMO2) cross-links involve residues Lys390, Lys407, Lys414, Lys449, Lys465, Lys474, and Lys479. The segment at 454 to 672 (EGEARLENEI…EFEFIIPESY (219 aa)) is interaction with CTNND1. Positions 471-480 (MANKRMKVKH) match the Nuclear localization signal motif. 3 consecutive C2H2-type zinc fingers follow at residues 494–516 (YICI…FNIH), 522–544 (YPCR…EIHH), and 550–573 (YQCL…KSVH). A required for DNA-binding region spans residues 514-638 (NIHSWEKKYP…TTTSTQNKPM (125 aa)). Glycyl lysine isopeptide (Lys-Gly) (interchain with G-Cter in SUMO2) cross-links involve residues Lys539, Lys570, Lys582, Lys611, and Lys618. Residues 616 to 635 (GYKVDTGKEPPVGTTTSTQN) form a disordered region.

In terms of assembly, self-associates. Interacts with CTNND2. Interacts with CTNND1, and this interaction inhibits binding to both methylated and non-methylated DNA. Interacts with NCOR1. Interacts with KPNA2/RCH1, which may mediate nuclear import of this protein. Interacts with CBFA2T3. As to expression, expressed in vascular endothelium.

Its subcellular location is the nucleus. The protein resides in the cytoplasm. In terms of biological role, transcriptional regulator with bimodal DNA-binding specificity. Binds to methylated CpG dinucleotides in the consensus sequence 5'-CGCG-3' and also binds to the non-methylated consensus sequence 5'-CTGCNA-3' also known as the consensus kaiso binding site (KBS). Recruits the N-CoR repressor complex to promote histone deacetylation and the formation of repressive chromatin structures in target gene promoters. May contribute to the repression of target genes of the Wnt signaling pathway. May also activate transcription of a subset of target genes by the recruitment of CTNND2. Represses expression of MMP7 in conjunction with transcriptional corepressors CBFA2T3, CBFA2T2 and RUNX1T1. This is Transcriptional regulator Kaiso (ZBTB33) from Homo sapiens (Human).